The following is a 663-amino-acid chain: 4-hydroxy-3-methylbut-2-en-1-yl diphosphate synthase (flavodoxin) (663 aa).

Residues cysteine 568, cysteine 571, cysteine 602, and glutamate 609 each coordinate [4Fe-4S] cluster.

The protein belongs to the IspG family. [4Fe-4S] cluster serves as cofactor.

It carries out the reaction (2E)-4-hydroxy-3-methylbut-2-enyl diphosphate + oxidized [flavodoxin] + H2O + 2 H(+) = 2-C-methyl-D-erythritol 2,4-cyclic diphosphate + reduced [flavodoxin]. The protein operates within isoprenoid biosynthesis; isopentenyl diphosphate biosynthesis via DXP pathway; isopentenyl diphosphate from 1-deoxy-D-xylulose 5-phosphate: step 5/6. Converts 2C-methyl-D-erythritol 2,4-cyclodiphosphate (ME-2,4cPP) into 1-hydroxy-2-methyl-2-(E)-butenyl 4-diphosphate. In Leptospira borgpetersenii serovar Hardjo-bovis (strain JB197), this protein is 4-hydroxy-3-methylbut-2-en-1-yl diphosphate synthase (flavodoxin).